Reading from the N-terminus, the 149-residue chain is Large ribosomal subunit protein bL9 (149 aa).

This sequence belongs to the bacterial ribosomal protein bL9 family.

Functionally, binds to the 23S rRNA. This is Large ribosomal subunit protein bL9 from Clostridioides difficile (strain 630) (Peptoclostridium difficile).